The primary structure comprises 299 residues: Oxygen-dependent coproporphyrinogen-III oxidase (299 aa).

Serine 92 is a binding site for substrate. A divalent metal cation is bound by residues histidine 96 and histidine 106. Histidine 106 functions as the Proton donor in the catalytic mechanism. 108 to 110 (NVR) is a substrate binding site. Residues histidine 145 and histidine 175 each coordinate a divalent metal cation. Positions 239-274 (YVEFNLVYDRGTLFGLQSGGRAESILMSLPPRVRWE) are important for dimerization. 257 to 259 (GGR) is a substrate binding site.

Belongs to the aerobic coproporphyrinogen-III oxidase family. Homodimer. A divalent metal cation serves as cofactor.

Its subcellular location is the cytoplasm. The catalysed reaction is coproporphyrinogen III + O2 + 2 H(+) = protoporphyrinogen IX + 2 CO2 + 2 H2O. Its pathway is porphyrin-containing compound metabolism; protoporphyrin-IX biosynthesis; protoporphyrinogen-IX from coproporphyrinogen-III (O2 route): step 1/1. In terms of biological role, involved in the heme biosynthesis. Catalyzes the aerobic oxidative decarboxylation of propionate groups of rings A and B of coproporphyrinogen-III to yield the vinyl groups in protoporphyrinogen-IX. The polypeptide is Oxygen-dependent coproporphyrinogen-III oxidase (Xanthomonas axonopodis pv. citri (strain 306)).